We begin with the raw amino-acid sequence, 284 residues long: D-tagatose-1,6-bisphosphate aldolase subunit GatY (284 aa).

The active-site Proton donor is the Asp-82. Residues His-83 and His-180 each contribute to the Zn(2+) site. Gly-181 is a binding site for dihydroxyacetone phosphate. His-208 serves as a coordination point for Zn(2+). Dihydroxyacetone phosphate is bound by residues 209–211 (GAS) and 230–233 (NVAT).

It belongs to the class II fructose-bisphosphate aldolase family. TagBP aldolase GatY subfamily. In terms of assembly, forms a complex with GatZ. Zn(2+) is required as a cofactor.

The enzyme catalyses D-tagatofuranose 1,6-bisphosphate = D-glyceraldehyde 3-phosphate + dihydroxyacetone phosphate. The protein operates within carbohydrate metabolism; D-tagatose 6-phosphate degradation; D-glyceraldehyde 3-phosphate and glycerone phosphate from D-tagatose 6-phosphate: step 2/2. In terms of biological role, catalytic subunit of the tagatose-1,6-bisphosphate aldolase GatYZ, which catalyzes the reversible aldol condensation of dihydroxyacetone phosphate (DHAP or glycerone-phosphate) with glyceraldehyde 3-phosphate (G3P) to produce tagatose 1,6-bisphosphate (TBP). Requires GatZ subunit for full activity and stability. Is involved in the catabolism of galactitol. The polypeptide is D-tagatose-1,6-bisphosphate aldolase subunit GatY (Shigella dysenteriae serotype 1 (strain Sd197)).